A 258-amino-acid chain; its full sequence is Peptidase inhibitor 15 (258 aa).

The first 21 residues, 1 to 21 (MIEMISISAAFLLSLLCETCG), serve as a signal peptide directing secretion. A propeptide spanning residues 22–60 (LVLPKSSDLAIAASNYTIIKPDLSARLDPVKAPKARRKR) is cleaved from the precursor. N-linked (GlcNAc...) asparagine glycosylation is found at Asn-36 and Asn-124. In terms of domain architecture, SCP spans 71-211 (VEYHNQVRGK…RRAVYLVCNY (141 aa)).

The protein belongs to the CRISP family.

Its subcellular location is the secreted. Serine protease inhibitor which displays weak inhibitory activity against trypsin. May be involved in facial patterning during embryonic development. This is Peptidase inhibitor 15 (pi15) from Xenopus laevis (African clawed frog).